We begin with the raw amino-acid sequence, 27 residues long: Paragonial peptide PS-1 (27 aa).

Low complexity predominate over residues 1–17 (DVPSANANANNQRTAAA). The segment at 1 to 27 (DVPSANANANNQRTAAAKPQANAEASS) is disordered.

As to expression, main cells of the accessory glands of males (paragonial gland).

It is found in the secreted. In terms of biological role, represses female sexual receptivity and stimulates oviposition. This peptide has a low activity. The chain is Paragonial peptide PS-1 (PapC) from Drosophila funebris (Fruit fly).